A 129-amino-acid chain; its full sequence is MRSSSPSQPPSIKRAHRQAKKRAIRRRRVDLQCGCSIYFHLGCAGHGFTHRGTHHCTSGGEWRVYLGARKSPLFQDTQSRGPTVYQNEGIPRTDTVQPQPEESVASPQSLPELPSLDDVDDSFWINLFS.

A disordered region spans residues 1–20; that stretch reads MRSSSPSQPPSIKRAHRQAK. Residues 13-28 carry the Nuclear localization signal motif; sequence KRAHRQAKKRAIRRRR. Residues 33–50 fold into a zinc finger; sequence CGCSIYFHLGCAGHGFTH. The disordered stretch occupies residues 73–118; it reads LFQDTQSRGPTVYQNEGIPRTDTVQPQPEESVASPQSLPELPSLDD. 2 stretches are compositionally biased toward polar residues: residues 74-86 and 94-109; these read FQDTQSRGPTVYQ and DTVQPQPEESVASPQS. A Phosphoserine; by host modification is found at S109. The interval 115–129 is transactivation; the sequence is SLDDVDDSFWINLFS.

This sequence belongs to the geminiviridae transcriptional activator protein family. Monomer. Homodimer. Homooligomer. Self-interaction correlates with nuclear localization and efficient activation of transcription. Monomers suppress local silencing by interacting with and inactivating host adenosine kinase 2 (ADK2) in the cytoplasm. Interacts with and inhibits host SNF1 kinase. Post-translationally, phosphorylated at Ser-109 by A.thaliana KIN10.

The protein localises to the host nucleus. Its subcellular location is the host cytoplasm. Strong activator of the late viral genes promoters. Enhances the expression of the capsid protein and nuclear shuttle protein. Acts as a suppressor of RNA-mediated gene silencing, also known as post-transcriptional gene silencing (PTGS), a mechanism of plant viral defense that limits the accumulation of viral RNAs. Suppresses the host RNA silencing by inhibiting adenosine kinase 2 (ADK2), a kinase involved in a general methylation pathway. Also suppresses the host basal defense by interacting with and inhibiting SNF1 kinase, a key regulator of cell metabolism implicated in innate antiviral defense. Determines pathogenicity. The chain is Transcriptional activator protein from Nicotiana tabacum (Common tobacco).